A 500-amino-acid chain; its full sequence is Lysine--tRNA ligase (500 aa).

Glu-410 and Glu-417 together coordinate Mg(2+).

It belongs to the class-II aminoacyl-tRNA synthetase family. Homodimer. Mg(2+) is required as a cofactor.

The protein localises to the cytoplasm. It carries out the reaction tRNA(Lys) + L-lysine + ATP = L-lysyl-tRNA(Lys) + AMP + diphosphate. The sequence is that of Lysine--tRNA ligase from Shewanella sediminis (strain HAW-EB3).